Reading from the N-terminus, the 237-residue chain is MRKQFLIAHRGYSTIAPENTHLAFAAAQLFGFDGLWMEVQLTKDKQIVVTNLDNYKVGNKTHKLSDINLVNLKKINLAKQFKVNVQEQTILTLKEVLMEFLTPFRFLLLFIKGEEEQQNQVLVEQLAQLLEGFELAKEKLILLSSHFSTIKYLNEKLKSFKTSFVFNSKKQLVHLTKDEITQNCRFLAPNDSFYHKNCAELQSYGLPIILWVIKGLLRYQFYENDRFVKFQIAAQLY.

A GP-PDE domain is found at 4–237; that stretch reads QFLIAHRGYS…VKFQIAAQLY (234 aa).

The protein to glycerophosphoryl diester phosphodiesterases (EC 3.1.4.46). This sequence to M.genitalium MG293.

This is an uncharacterized protein from Mycoplasma pneumoniae (strain ATCC 29342 / M129 / Subtype 1) (Mycoplasmoides pneumoniae).